The chain runs to 238 residues: Ribonuclease PH (238 aa).

Residues Arg-86 and 124–126 (GTR) contribute to the phosphate site.

The protein belongs to the RNase PH family. Homohexameric ring arranged as a trimer of dimers.

It catalyses the reaction tRNA(n+1) + phosphate = tRNA(n) + a ribonucleoside 5'-diphosphate. In terms of biological role, phosphorolytic 3'-5' exoribonuclease that plays an important role in tRNA 3'-end maturation. Removes nucleotide residues following the 3'-CCA terminus of tRNAs; can also add nucleotides to the ends of RNA molecules by using nucleoside diphosphates as substrates, but this may not be physiologically important. Probably plays a role in initiation of 16S rRNA degradation (leading to ribosome degradation) during starvation. This Photobacterium profundum (strain SS9) protein is Ribonuclease PH.